We begin with the raw amino-acid sequence, 962 residues long: Rho GTPase-activating protein syd-1 (962 aa).

3 disordered regions span residues 231 to 367 (GKKS…MRSD), 397 to 419 (PRTL…RIMT), and 437 to 471 (CGEE…NGSP). Polar residues-rich tracts occupy residues 243-261 (NATT…SSPR), 323-345 (SFNS…SSTA), 401-412 (RQPNDSNKSNSL), and 453-471 (PPFS…NGSP). Positions 572-696 (RAAGPGINVD…NDDRVFALNL (125 aa)) constitute a C2 domain. Positions 729–923 (VPLGRLVQRE…LDMNQASSSL (195 aa)) constitute a Rho-GAP domain. A compositionally biased stretch (polar residues) spans 934-947 (VNSESGSDSPATSG). The interval 934–962 (VNSESGSDSPATSGQKGGGGVSYVSESQC) is disordered.

The protein localises to the synapse. Probable GTPase activator for the Rho-type GTPases by converting them to an inactive GDP-bound state. Regulates the localization and assembly of presynaptic components during presynaptic development and is required for specifying the identity of axons during initial polarity acquisition. In these roles it is thought to act cell autonomously downstream of syg-1 and syg-2 and upstream of syd-2, possibly as a positive regulator of the latter. Required for the control of movement, egg-laying and the correct localization of elks-1. This Caenorhabditis briggsae protein is Rho GTPase-activating protein syd-1.